The following is a 152-amino-acid chain: MLELDLQRASQQPAPSDEQFRQWCELALRQRTADSELTIRLVDEAEGRELNHTWRHKDYATNVLSFPADVPDELLDIPLLGDLVICIAVVEREAAEQGKELQAHWAHLVIHGCLHLLGYDHIDDDEAEEMEALERTLLAELGHPDPYADDES.

The Zn(2+) site is built by His111, His115, and His121.

The protein belongs to the endoribonuclease YbeY family. Requires Zn(2+) as cofactor.

The protein resides in the cytoplasm. Functionally, single strand-specific metallo-endoribonuclease involved in late-stage 70S ribosome quality control and in maturation of the 3' terminus of the 16S rRNA. In Pseudomonas fluorescens (strain ATCC BAA-477 / NRRL B-23932 / Pf-5), this protein is Endoribonuclease YbeY.